A 450-amino-acid chain; its full sequence is Ribosomal protein uS12 methylthiotransferase RimO (450 aa).

The 111-residue stretch at 16–126 (PRISFVSLGC…VLDAVHQAVP (111 aa)) folds into the MTTase N-terminal domain. [4Fe-4S] cluster-binding residues include cysteine 25, cysteine 61, cysteine 90, cysteine 157, cysteine 161, and cysteine 164. The 238-residue stretch at 143 to 380 (LTPRHYAYLK…MLKQQAISAR (238 aa)) folds into the Radical SAM core domain. One can recognise a TRAM domain in the interval 383–449 (KRKVGTRQQV…AYDLIGSAVG (67 aa)).

Belongs to the methylthiotransferase family. RimO subfamily. [4Fe-4S] cluster is required as a cofactor.

The protein resides in the cytoplasm. The enzyme catalyses L-aspartate(89)-[ribosomal protein uS12]-hydrogen + (sulfur carrier)-SH + AH2 + 2 S-adenosyl-L-methionine = 3-methylsulfanyl-L-aspartate(89)-[ribosomal protein uS12]-hydrogen + (sulfur carrier)-H + 5'-deoxyadenosine + L-methionine + A + S-adenosyl-L-homocysteine + 2 H(+). Functionally, catalyzes the methylthiolation of an aspartic acid residue of ribosomal protein uS12. The polypeptide is Ribosomal protein uS12 methylthiotransferase RimO (Azorhizobium caulinodans (strain ATCC 43989 / DSM 5975 / JCM 20966 / LMG 6465 / NBRC 14845 / NCIMB 13405 / ORS 571)).